Reading from the N-terminus, the 473-residue chain is Photosystem II CP43 reaction center protein (473 aa).

Residues 1-14 constitute a propeptide that is removed on maturation; it reads MKILYSLRRFYHVE. Position 15 is an N-acetylthreonine (Thr-15). Thr-15 is modified (phosphothreonine). 5 helical membrane-spanning segments follow: residues 69–93, 134–155, 178–200, 255–275, and 291–312; these read LFEVAHFVPEKPMYEQGLILLPHLA, LLGPETLEESFPFFGYVWKDRN, KALYFGGVYDTWAPGGGDVRKIT, KPFAWARRAFVWSGEAYLSYS, and WFNNTAYPSEFYGPTGPEASQA. Glu-367 is a [CaMn4O5] cluster binding site. A helical membrane pass occupies residues 447-471; the sequence is RARAAAAGFEKGIDRDLEPVLYMTP.

This sequence belongs to the PsbB/PsbC family. PsbC subfamily. PSII is composed of 1 copy each of membrane proteins PsbA, PsbB, PsbC, PsbD, PsbE, PsbF, PsbH, PsbI, PsbJ, PsbK, PsbL, PsbM, PsbT, PsbX, PsbY, PsbZ, Psb30/Ycf12, at least 3 peripheral proteins of the oxygen-evolving complex and a large number of cofactors. It forms dimeric complexes. Requires Binds multiple chlorophylls and provides some of the ligands for the Ca-4Mn-5O cluster of the oxygen-evolving complex. It may also provide a ligand for a Cl- that is required for oxygen evolution. PSII binds additional chlorophylls, carotenoids and specific lipids. as cofactor.

It localises to the plastid. The protein localises to the chloroplast thylakoid membrane. In terms of biological role, one of the components of the core complex of photosystem II (PSII). It binds chlorophyll and helps catalyze the primary light-induced photochemical processes of PSII. PSII is a light-driven water:plastoquinone oxidoreductase, using light energy to abstract electrons from H(2)O, generating O(2) and a proton gradient subsequently used for ATP formation. The sequence is that of Photosystem II CP43 reaction center protein from Saccharum hybrid (Sugarcane).